Consider the following 384-residue polypeptide: 3,7-dimethylxanthine N-methyltransferase 1 (384 aa).

Tyr-18, Cys-61, Asn-66, Asp-100, Leu-101, Ser-139, Phe-140, and Cys-156 together coordinate S-adenosyl-L-homocysteine. Residue Tyr-157 participates in theobromine binding. Residue Cys-158 coordinates S-adenosyl-L-homocysteine. Residues His-160 and Trp-161 each coordinate theobromine. Asn-178 is a binding site for Mg(2+). Residue Ser-237 coordinates theobromine. Positions 260, 262, and 263 each coordinate Mg(2+). Theobromine is bound at residue Tyr-368.

Belongs to the methyltransferase superfamily. Type-7 methyltransferase family. It depends on Mg(2+) as a cofactor. In terms of tissue distribution, highly expressed in developing endosperm and immature fruits (grains). Detected in young leaves and flower buds, but not in mature fruits.

The enzyme catalyses theobromine + S-adenosyl-L-methionine = caffeine + S-adenosyl-L-homocysteine + H(+). It carries out the reaction 1,7-dimethylxanthine + S-adenosyl-L-methionine = caffeine + S-adenosyl-L-homocysteine + H(+). It catalyses the reaction 7-methylxanthine + S-adenosyl-L-methionine = theobromine + S-adenosyl-L-homocysteine + H(+). It functions in the pathway alkaloid biosynthesis. In terms of biological role, involved in the biosynthesis of caffeine. Catalyzes the conversion of 7-methylxanthine to caffeine, likely via theobromine as an intermediate. This is 3,7-dimethylxanthine N-methyltransferase 1 from Coffea arabica (Arabian coffee).